Here is a 142-residue protein sequence, read N- to C-terminus: MGNGLNAGRKLLENRKKFRWSDRDYKRRVLQLKRKSDPLEGAPQAKGIAIEKVGIEAKQPNSAIRKCVKVQLIKNGRQITAFAVGDGAINYIDEHDEVTVEGIGGRMGRSKGDIPGVRYKVVAVNGISLKELVKGRKEKTVR.

The protein belongs to the universal ribosomal protein uS12 family. As to quaternary structure, part of the 30S ribosomal subunit.

Functionally, with S4 and S5 plays an important role in translational accuracy. Located at the interface of the 30S and 50S subunits. The protein is Small ribosomal subunit protein uS12 of Thermoplasma volcanium (strain ATCC 51530 / DSM 4299 / JCM 9571 / NBRC 15438 / GSS1).